A 251-amino-acid chain; its full sequence is Probable transcriptional regulatory protein Arth_2304 (251 aa).

The protein belongs to the TACO1 family.

It localises to the cytoplasm. This is Probable transcriptional regulatory protein Arth_2304 from Arthrobacter sp. (strain FB24).